We begin with the raw amino-acid sequence, 192 residues long: Ion-translocating oxidoreductase complex subunit A (192 aa).

6 helical membrane-spanning segments follow: residues 5–25 (LLLL…FLGL), 39–59 (IGMS…SYLV), 65–85 (LPFD…AVVV), 102–122 (ALGI…VALL), 134–154 (AIYG…FSAM), and 171–191 (AIAM…TGLV).

The protein belongs to the NqrDE/RnfAE family. The complex is composed of six subunits: RnfA, RnfB, RnfC, RnfD, RnfE and RnfG.

Its subcellular location is the cell inner membrane. Functionally, part of a membrane-bound complex that couples electron transfer with translocation of ions across the membrane. The protein is Ion-translocating oxidoreductase complex subunit A of Shewanella putrefaciens (strain CN-32 / ATCC BAA-453).